The sequence spans 399 residues: Elongation factor Tu (399 aa).

Residues 10–204 form the tr-type G domain; that stretch reads KPHVNIGTIG…AVDEAIPEPE (195 aa). The G1 stretch occupies residues 19-26; that stretch reads GHVDHGKT. Residue 19–26 coordinates GTP; it reads GHVDHGKT. Thr-26 contacts Mg(2+). Residues 60 to 64 form a G2 region; sequence GITIN. Residues 81 to 84 are G3; it reads DCPG. GTP is bound by residues 81-85 and 136-139; these read DCPGH and NKCD. Positions 136–139 are G4; that stretch reads NKCD. The segment at 174 to 176 is G5; the sequence is SGL.

This sequence belongs to the TRAFAC class translation factor GTPase superfamily. Classic translation factor GTPase family. EF-Tu/EF-1A subfamily. In terms of assembly, monomer.

The protein localises to the cytoplasm. It carries out the reaction GTP + H2O = GDP + phosphate + H(+). Its function is as follows. GTP hydrolase that promotes the GTP-dependent binding of aminoacyl-tRNA to the A-site of ribosomes during protein biosynthesis. The chain is Elongation factor Tu from Parasynechococcus marenigrum (strain WH8102).